Here is a 55-residue protein sequence, read N- to C-terminus: Large ribosomal subunit protein bL33 (55 aa).

The protein belongs to the bacterial ribosomal protein bL33 family.

The chain is Large ribosomal subunit protein bL33 from Gluconacetobacter diazotrophicus (strain ATCC 49037 / DSM 5601 / CCUG 37298 / CIP 103539 / LMG 7603 / PAl5).